Here is a 1284-residue protein sequence, read N- to C-terminus: A-type inclusion protein A25 homolog (1284 aa).

The tract at residues K340–E383 is disordered. The segment covering E348 to K357 has biased composition (basic and acidic residues). Tandem repeats lie at residues V611–E637, D638–G665, N666–G689, N690–D720, T721–D751, M752–T780, S781–S811, A812–S842, Y843–A871, and K872–E912. The interval V611 to E912 is 10 X approximate tandem repeats. The segment at P1169–S1234 is disordered. A compositionally biased stretch (low complexity) spans V1180–P1192. The span at S1211 to A1221 shows a compositional bias: polar residues.

The protein belongs to the poxviridae A25 protein family. As to quaternary structure, interacts (via N-terminus) with protein A26.

Its subcellular location is the virion. In terms of biological role, structural protein that forms a matrix surrounding the mature virion (MV) through interaction with protein A26. Presence of protein A25 in the virion structurally prevents direct virus-cell fusion mechanism. The chain is A-type inclusion protein A25 homolog (ATI) from Apodemus sylvaticus (European woodmouse).